Reading from the N-terminus, the 178-residue chain is ATP synthase subunit d, mitochondrial (178 aa).

The tract at residues 149 to 178 (NKPTFWPHTPEEQVGYKSKEQLEAEAQGHH) is disordered. The segment covering 165–178 (KSKEQLEAEAQGHH) has biased composition (basic and acidic residues).

This sequence belongs to the ATPase d subunit family. F-type ATPases have 2 components, CF(1) - the catalytic core - and CF(0) - the membrane proton channel. CF(0) seems to have nine subunits: a, b, c, d, e, f, g, F6 and 8 (or A6L).

The protein resides in the mitochondrion. It is found in the mitochondrion inner membrane. In terms of biological role, mitochondrial membrane ATP synthase (F(1)F(0) ATP synthase or Complex V) produces ATP from ADP in the presence of a proton gradient across the membrane which is generated by electron transport complexes of the respiratory chain. F-type ATPases consist of two structural domains, F(1) - containing the extramembraneous catalytic core, and F(0) - containing the membrane proton channel, linked together by a central stalk and a peripheral stalk. During catalysis, ATP synthesis in the catalytic domain of F(1) is coupled via a rotary mechanism of the central stalk subunits to proton translocation. Part of the complex F(0) domain and the peripheric stalk, which acts as a stator to hold the catalytic alpha(3)beta(3) subcomplex and subunit a/ATP6 static relative to the rotary elements. This Drosophila melanogaster (Fruit fly) protein is ATP synthase subunit d, mitochondrial.